The sequence spans 112 residues: Cortistatin (112 aa).

The N-terminal stretch at 1 to 27 (MGGCSTRGKRPSALSLLLLLLLSGIAA) is a signal peptide. A propeptide spanning residues 28–81 (SALPLESGPTGQDSVQDATGGRRTGLLTFLAWWHEWASQDSSSTAFEGGTPELS) is cleaved from the precursor. The segment at 66 to 101 (QDSSSTAFEGGTPELSKRQERPPLQQPPHRDKKPCK) is disordered. A disulfide bond links Cys100 and Cys111.

Belongs to the somatostatin family. In terms of tissue distribution, interneurons in the cerebral cortex and hippocampus.

The protein resides in the secreted. Functionally, neuropeptide with neuronal depressant and sleep-modulating properties. The protein is Cortistatin (Cort) of Rattus norvegicus (Rat).